We begin with the raw amino-acid sequence, 397 residues long: Arginine biosynthesis bifunctional protein ArgJ (397 aa).

Threonine 147, lysine 173, threonine 184, glutamate 270, asparagine 392, and threonine 397 together coordinate substrate. The active-site Nucleophile is the threonine 184.

It belongs to the ArgJ family. In terms of assembly, heterotetramer of two alpha and two beta chains.

Its subcellular location is the cytoplasm. It carries out the reaction N(2)-acetyl-L-ornithine + L-glutamate = N-acetyl-L-glutamate + L-ornithine. The catalysed reaction is L-glutamate + acetyl-CoA = N-acetyl-L-glutamate + CoA + H(+). The protein operates within amino-acid biosynthesis; L-arginine biosynthesis; L-ornithine and N-acetyl-L-glutamate from L-glutamate and N(2)-acetyl-L-ornithine (cyclic): step 1/1. Its pathway is amino-acid biosynthesis; L-arginine biosynthesis; N(2)-acetyl-L-ornithine from L-glutamate: step 1/4. In terms of biological role, catalyzes two activities which are involved in the cyclic version of arginine biosynthesis: the synthesis of N-acetylglutamate from glutamate and acetyl-CoA as the acetyl donor, and of ornithine by transacetylation between N(2)-acetylornithine and glutamate. The protein is Arginine biosynthesis bifunctional protein ArgJ of Streptococcus thermophilus (strain CNRZ 1066).